The following is a 138-amino-acid chain: Nucleoside diphosphate kinase (138 aa).

The ATP site is built by Lys-9, Phe-57, Arg-85, Thr-91, Arg-102, and Asn-112. His-120 acts as the Pros-phosphohistidine intermediate in catalysis.

It belongs to the NDK family. As to quaternary structure, homotetramer. Mg(2+) is required as a cofactor.

It localises to the cytoplasm. It carries out the reaction a 2'-deoxyribonucleoside 5'-diphosphate + ATP = a 2'-deoxyribonucleoside 5'-triphosphate + ADP. It catalyses the reaction a ribonucleoside 5'-diphosphate + ATP = a ribonucleoside 5'-triphosphate + ADP. In terms of biological role, major role in the synthesis of nucleoside triphosphates other than ATP. The ATP gamma phosphate is transferred to the NDP beta phosphate via a ping-pong mechanism, using a phosphorylated active-site intermediate. The chain is Nucleoside diphosphate kinase from Streptococcus agalactiae serotype III (strain NEM316).